We begin with the raw amino-acid sequence, 361 residues long: SUN domain-containing protein 3 (361 aa).

Residues 1–47 (MSGKAKARRAAMFFRGCSEDASGSTSGSTLLSEDENPDTNGVTRSWK) lie on the Nuclear side of the membrane. The segment at 19-38 (EDASGSTSGSTLLSEDENPD) is disordered. A compositionally biased stretch (low complexity) spans 22-31 (SGSTSGSTLL). The helical transmembrane segment at 48–69 (IILSTMFTLTFLLVGLLSHQWL) threads the bilayer. The Perinuclear space segment spans residues 70 to 361 (KETEVPQKSR…RVHGTPGKHI (292 aa)). Residues 103 to 129 (KEQLELLKKESQTLENNFHKILLLIEQ) adopt a coiled-coil conformation. Residues 197–358 (GASIIEAGTS…YRFRVHGTPG (162 aa)) form the SUN domain.

In terms of assembly, self-associates. Interacts with SYNE1 and SPAG4/SUN4. Proposed to form a spermatogenesis-specific LINC complex with SYNE1 during sperm head formation possibly implicating a SUN domain-based heterotrimer with SPAG4/SUN4 associating with SYNE1.

It localises to the membrane. The protein localises to the nucleus envelope. It is found in the nucleus inner membrane. Functionally, as a probable component of the LINC (LInker of Nucleoskeleton and Cytoskeleton) complex, involved in the connection between the nuclear lamina and the cytoskeleton. The nucleocytoplasmic interactions established by the LINC complex play an important role in the transmission of mechanical forces across the nuclear envelope and in nuclear movement and positioning. May be involved in nuclear remodeling during sperm head formation in spermatogenesis. A probable SUN3:SYNE1 LINC complex may tether spermatid nuclei to posterior cytoskeletal structures such as the manchette. The chain is SUN domain-containing protein 3 (SUN3) from Macaca fascicularis (Crab-eating macaque).